Here is a 143-residue protein sequence, read N- to C-terminus: NADH-quinone oxidoreductase subunit A (143 aa).

3 consecutive transmembrane segments (helical) span residues Tyr12–Gly32, Phe61–Trp81, and Trp90–Ala110.

It belongs to the complex I subunit 3 family. NDH-1 is composed of 13 different subunits. Subunits NuoA, H, J, K, L, M, N constitute the membrane sector of the complex.

It localises to the cell inner membrane. The catalysed reaction is a quinone + NADH + 5 H(+)(in) = a quinol + NAD(+) + 4 H(+)(out). In terms of biological role, NDH-1 shuttles electrons from NADH, via FMN and iron-sulfur (Fe-S) centers, to quinones in the respiratory chain. The immediate electron acceptor for the enzyme in this species is believed to be ubiquinone. Couples the redox reaction to proton translocation (for every two electrons transferred, four hydrogen ions are translocated across the cytoplasmic membrane), and thus conserves the redox energy in a proton gradient. The chain is NADH-quinone oxidoreductase subunit A from Blochmanniella floridana.